A 324-amino-acid polypeptide reads, in one-letter code: MQDLIDSPTAARTPAEEKIRHEGNKLSKRLARETTRAIADYNMIEAGDRVMVCLSGGKDSYALLDILLSLRKRAPFSFDIVAVNLDQKQPGFPPEVLPNYLTSLGVPFHIETQDTYSIVTRVIPEGKTMCSLCSRLRRGILYRVAGELGATKIALGHHRDDILATFFLNLFYGGKAKAMPPKLVSDDGRHTVIRPLAYVPEHDLVAYAKFKQFPIIPCNLCGSQENLKRQEVSRMIQEWDRRHPGRSWNVFNALSRIVPSHLMDRDLFDFAGLKPTGRPDANGDTAFDPIDPEDPREDAGDACASSPADGDAAMAEQKVVFARL.

The segment at M1 to L26 is disordered. The segment covering P14–L26 has biased composition (basic and acidic residues). The PP-loop motif signature appears at S55 to S60. C130, C133, and C221 together coordinate [4Fe-4S] cluster. The disordered stretch occupies residues R278–G310.

Belongs to the TtcA family. As to quaternary structure, homodimer. Requires Mg(2+) as cofactor. It depends on [4Fe-4S] cluster as a cofactor.

Its subcellular location is the cytoplasm. It catalyses the reaction cytidine(32) in tRNA + S-sulfanyl-L-cysteinyl-[cysteine desulfurase] + AH2 + ATP = 2-thiocytidine(32) in tRNA + L-cysteinyl-[cysteine desulfurase] + A + AMP + diphosphate + H(+). Its pathway is tRNA modification. In terms of biological role, catalyzes the ATP-dependent 2-thiolation of cytidine in position 32 of tRNA, to form 2-thiocytidine (s(2)C32). The sulfur atoms are provided by the cysteine/cysteine desulfurase (IscS) system. The polypeptide is tRNA-cytidine(32) 2-sulfurtransferase (Bordetella petrii (strain ATCC BAA-461 / DSM 12804 / CCUG 43448)).